A 385-amino-acid polypeptide reads, in one-letter code: 8-amino-7-oxononanoate synthase (385 aa).

Substrate is bound at residue Arg21. 108-109 (GF) contacts pyridoxal 5'-phosphate. His133 is a substrate binding site. Pyridoxal 5'-phosphate-binding residues include Ser179, His207, and Thr233. The residue at position 236 (Lys236) is an N6-(pyridoxal phosphate)lysine. Residue Thr352 coordinates substrate.

This sequence belongs to the class-II pyridoxal-phosphate-dependent aminotransferase family. BioF subfamily. In terms of assembly, homodimer. Pyridoxal 5'-phosphate serves as cofactor.

It catalyses the reaction 6-carboxyhexanoyl-[ACP] + L-alanine + H(+) = (8S)-8-amino-7-oxononanoate + holo-[ACP] + CO2. The protein operates within cofactor biosynthesis; biotin biosynthesis. Catalyzes the decarboxylative condensation of pimeloyl-[acyl-carrier protein] and L-alanine to produce 8-amino-7-oxononanoate (AON), [acyl-carrier protein], and carbon dioxide. This chain is 8-amino-7-oxononanoate synthase, found in Salmonella enteritidis PT4 (strain P125109).